We begin with the raw amino-acid sequence, 548 residues long: CTP synthase (548 aa).

The segment at Met-1–Leu-267 is amidoligase domain. Ser-14 provides a ligand contact to CTP. Ser-14 serves as a coordination point for UTP. ATP contacts are provided by residues Ser-15–Leu-20 and Asp-72. Residues Asp-72 and Glu-141 each coordinate Mg(2+). Residues Asp-148–Glu-150, Lys-188–Gln-193, and Lys-224 contribute to the CTP site. UTP contacts are provided by residues Lys-188–Gln-193 and Lys-224. A Glutamine amidotransferase type-1 domain is found at Thr-292–Lys-545. Gly-354 contacts L-glutamine. The active-site Nucleophile; for glutamine hydrolysis is the Cys-381. L-glutamine-binding positions include Leu-382–Gln-385, Glu-405, and Arg-473. Active-site residues include His-518 and Glu-520.

It belongs to the CTP synthase family. As to quaternary structure, homotetramer.

The catalysed reaction is UTP + L-glutamine + ATP + H2O = CTP + L-glutamate + ADP + phosphate + 2 H(+). It carries out the reaction L-glutamine + H2O = L-glutamate + NH4(+). It catalyses the reaction UTP + NH4(+) + ATP = CTP + ADP + phosphate + 2 H(+). It functions in the pathway pyrimidine metabolism; CTP biosynthesis via de novo pathway; CTP from UDP: step 2/2. With respect to regulation, allosterically activated by GTP, when glutamine is the substrate; GTP has no effect on the reaction when ammonia is the substrate. The allosteric effector GTP functions by stabilizing the protein conformation that binds the tetrahedral intermediate(s) formed during glutamine hydrolysis. Inhibited by the product CTP, via allosteric rather than competitive inhibition. In terms of biological role, catalyzes the ATP-dependent amination of UTP to CTP with either L-glutamine or ammonia as the source of nitrogen. Regulates intracellular CTP levels through interactions with the four ribonucleotide triphosphates. This chain is CTP synthase, found in Oleidesulfovibrio alaskensis (strain ATCC BAA-1058 / DSM 17464 / G20) (Desulfovibrio alaskensis).